An 833-amino-acid polypeptide reads, in one-letter code: Leucine--tRNA ligase (833 aa).

Positions 41–52 match the 'HIGH' region motif; it reads PYPSGAGLHVGH. The 'KMSKS' region signature appears at 610-614; that stretch reads KMSKS. Lys613 is a binding site for ATP.

The protein belongs to the class-I aminoacyl-tRNA synthetase family.

Its subcellular location is the cytoplasm. The enzyme catalyses tRNA(Leu) + L-leucine + ATP = L-leucyl-tRNA(Leu) + AMP + diphosphate. The protein is Leucine--tRNA ligase of Streptococcus pyogenes serotype M1.